Consider the following 308-residue polypeptide: Mycothiol acetyltransferase (308 aa).

2 N-acetyltransferase domains span residues 16–152 (ETLA…RPLA) and 165–308 (VTVR…RTES). E47 contacts 1D-myo-inositol 2-(L-cysteinylamino)-2-deoxy-alpha-D-glucopyranoside. Acetyl-CoA is bound at residue 91 to 93 (LVV). Residues E192, K231, and E240 each contribute to the 1D-myo-inositol 2-(L-cysteinylamino)-2-deoxy-alpha-D-glucopyranoside site. Residues 244–246 (LGV) and 251–257 (QGGGLGK) each bind acetyl-CoA. A 1D-myo-inositol 2-(L-cysteinylamino)-2-deoxy-alpha-D-glucopyranoside-binding site is contributed by Y278.

Belongs to the acetyltransferase family. MshD subfamily. As to quaternary structure, monomer.

It carries out the reaction 1D-myo-inositol 2-(L-cysteinylamino)-2-deoxy-alpha-D-glucopyranoside + acetyl-CoA = mycothiol + CoA + H(+). Functionally, catalyzes the transfer of acetyl from acetyl-CoA to desacetylmycothiol (Cys-GlcN-Ins) to form mycothiol. This is Mycothiol acetyltransferase from Streptomyces avermitilis (strain ATCC 31267 / DSM 46492 / JCM 5070 / NBRC 14893 / NCIMB 12804 / NRRL 8165 / MA-4680).